Reading from the N-terminus, the 2851-residue chain is Highly reducing polyketide synthase sthA (2851 aa).

The Ketosynthase family 3 (KS3) domain maps to 8-415 (NEPIVIIGSG…GTNAHAIVEG (408 aa)). The disordered stretch occupies residues 304–324 (LDPESPNDRPQYIESHGTGTP). The acyl transferase (AT) domain stretch occupies residues 529 to 851 (IFTGQGAQYA…PYHGSLVRGE (323 aa)). The segment at 926-1059 (HQLLGNVSPD…GELNILLVDD (134 aa)) is N-terminal hotdog fold. A PKS/mFAS DH domain is found at 926-1235 (HQLLGNVSPD…FKPVGSDAKD (310 aa)). Positions 949–1242 (PKEMTWLEGH…AKDDRNVFYK (294 aa)) are dehydratase (DH) domain. His-958 (proton acceptor; for dehydratase activity) is an active-site residue. The tract at residues 1076–1235 (MIPVQPSRLY…FKPVGSDAKD (160 aa)) is C-terminal hotdog fold. The Proton donor; for dehydratase activity role is filled by Asp-1137. Residues 1390–1577 (QCTLWVAGVL…GIDTMSPPEL (188 aa)) form a methyltransferase (MT) domain region. The interval 2079–2252 (TYWLVGLSGA…RSSVVNVGAI (174 aa)) is ketoreductase (KR)domain. A Carrier domain is found at 2360–2443 (ADITKVVQQA…DLAAESIPAE (84 aa)). Ser-2399 carries the O-(pantetheine 4'-phosphoryl)serine modification. The interval 2447–2496 (HVQQQQQQAGRQDASSNTSSDDETASTLPTSPESASPGTSTPVPEKDISP) is disordered. The segment covering 2455 to 2488 (AGRQDASSNTSSDDETASTLPTSPESASPGTSTP) has biased composition (polar residues). Residues 2535 to 2767 (LTGCSGLLGH…DLVSVDTCCS (233 aa)) form a reductase (R) domain region.

Pantetheine 4'-phosphate is required as a cofactor.

It catalyses the reaction 7 malonyl-CoA + acetyl-CoA + 10 AH2 + 5 S-adenosyl-L-methionine + 2 H(+) = dehydroprobetaenone I + 10 A + 5 S-adenosyl-L-homocysteine + 7 CO2 + 8 CoA + 6 H2O. The protein operates within mycotoxin biosynthesis. Its function is as follows. Highly reducing polyketide synthase; part of the gene cluster that mediates the biosynthesis of the phytotoxin stemphyloxin II. The first step of the pathway is the synthesis of dehydroprobetaenone I by the polyketide synthase sthA and the enoyl reductase sthE via condensation of one acetyl-CoA starter unit with 7 malonyl-CoA units and 5 methylations. The C-terminal reductase (R) domain of sthA catalyzes the reductive release of the polyketide chain. Because sthA lacks a designated enoylreductase (ER) domain, the required activity is provided the enoyl reductase sthE. The short-chain dehydrogenase/reductase sthC then catalyzes reduction of dehydroprobetaenone I to probetaenone I. The cytochrome P450 monooxygenase sthF catalyzes successive epoxidation, oxidation (resulting from epoxide opening) and hydroxylation to install a tertiary alcohol in the decaline ring to yield betaenone C from dehydroprobetaenone I and betaenone B from probetaenone I. The FAD-linked oxidoreductase sthB is responsible for the conversion of betaenone C to betaenone A via an intramolecular aldol reaction between C-1 and C-17 to form the bridged tricyclic system in betaenone A. Finally, the cytochrome P450 monooxygenase sthD catalyzes the hydroxylation of C-15 to afford the final metabolite stemphyloxin II. The chain is Highly reducing polyketide synthase sthA from Phaeosphaeria nodorum (strain SN15 / ATCC MYA-4574 / FGSC 10173) (Glume blotch fungus).